The chain runs to 176 residues: Peptide methionine sulfoxide reductase B3 (176 aa).

A signal peptide spans 1–26 (MNIVNSKILFLSFTLLLLLQSSIVES). Residues 51–172 (DEEWRAILSP…NSVSLKFTPA (122 aa)) enclose the MsrB domain. Residues Cys-90, Cys-93, Cys-136, and Cys-139 each coordinate Zn(2+). The cysteines at positions 108 and 161 are disulfide-linked. The active-site Nucleophile is Cys-161.

The protein belongs to the MsrB Met sulfoxide reductase family. The cofactor is Zn(2+).

It is found in the endoplasmic reticulum. The enzyme catalyses L-methionyl-[protein] + [thioredoxin]-disulfide + H2O = L-methionyl-(R)-S-oxide-[protein] + [thioredoxin]-dithiol. Its function is as follows. Catalyzes the reduction of methionine sulfoxide (MetSO) to methionine in proteins. Plays a protective role against oxidative stress by restoring activity to proteins that have been inactivated by methionine oxidation. Involved in cold tolerance. Eliminates MetSO and reactive oxygen species that accumulate at the ER during cold acclimation. MSRB family specifically reduces the MetSO R-enantiomer. In Arabidopsis thaliana (Mouse-ear cress), this protein is Peptide methionine sulfoxide reductase B3 (MSRB3).